A 910-amino-acid polypeptide reads, in one-letter code: Inactive disease susceptibility protein LOV1 (910 aa).

Positions 22-60 (ARLNGIGEQVDGLKRQLGRLQSLLKDADAKKHESERVRN) form a coiled coil. The NB-ARC domain maps to 169–461 (EQSVEALAGH…AAEGIITSSD (293 aa)). LRR repeat units lie at residues 584-609 (LPLL…IGDL), 610-632 (IHLR…LRNL), and 634-655 (LLLY…LKEM).

The protein belongs to the disease resistance NB-LRR family. RPP8/HRT subfamily.

In Arabidopsis thaliana (Mouse-ear cress), this protein is Inactive disease susceptibility protein LOV1 (LOV1).